A 426-amino-acid chain; its full sequence is Enolase (426 aa).

Gln-162 provides a ligand contact to (2R)-2-phosphoglycerate. The active-site Proton donor is the Glu-204. Asp-241, Glu-288, and Asp-315 together coordinate Mg(2+). 4 residues coordinate (2R)-2-phosphoglycerate: Lys-340, Arg-369, Ser-370, and Lys-391. Lys-340 serves as the catalytic Proton acceptor.

The protein belongs to the enolase family. The cofactor is Mg(2+).

It localises to the cytoplasm. The protein localises to the secreted. Its subcellular location is the cell surface. It catalyses the reaction (2R)-2-phosphoglycerate = phosphoenolpyruvate + H2O. The protein operates within carbohydrate degradation; glycolysis; pyruvate from D-glyceraldehyde 3-phosphate: step 4/5. Functionally, catalyzes the reversible conversion of 2-phosphoglycerate (2-PG) into phosphoenolpyruvate (PEP). It is essential for the degradation of carbohydrates via glycolysis. The protein is Enolase of Bacteroides thetaiotaomicron (strain ATCC 29148 / DSM 2079 / JCM 5827 / CCUG 10774 / NCTC 10582 / VPI-5482 / E50).